A 388-amino-acid polypeptide reads, in one-letter code: Succinate--CoA ligase [ADP-forming] subunit beta (388 aa).

The 236-residue stretch at 9 to 244 folds into the ATP-grasp domain; that stretch reads KSLFAEYGLP…PSQDDAREAH (236 aa). Residues Lys-46, 53-55, Glu-99, Thr-102, and Glu-107 contribute to the ATP site; that span reads GRG. Asn-199 and Asp-213 together coordinate Mg(2+). Substrate is bound by residues Asn-264 and 321–323; that span reads GIV.

It belongs to the succinate/malate CoA ligase beta subunit family. As to quaternary structure, heterotetramer of two alpha and two beta subunits. It depends on Mg(2+) as a cofactor.

It carries out the reaction succinate + ATP + CoA = succinyl-CoA + ADP + phosphate. It catalyses the reaction GTP + succinate + CoA = succinyl-CoA + GDP + phosphate. It functions in the pathway carbohydrate metabolism; tricarboxylic acid cycle; succinate from succinyl-CoA (ligase route): step 1/1. Its function is as follows. Succinyl-CoA synthetase functions in the citric acid cycle (TCA), coupling the hydrolysis of succinyl-CoA to the synthesis of either ATP or GTP and thus represents the only step of substrate-level phosphorylation in the TCA. The beta subunit provides nucleotide specificity of the enzyme and binds the substrate succinate, while the binding sites for coenzyme A and phosphate are found in the alpha subunit. The sequence is that of Succinate--CoA ligase [ADP-forming] subunit beta from Shewanella oneidensis (strain ATCC 700550 / JCM 31522 / CIP 106686 / LMG 19005 / NCIMB 14063 / MR-1).